Consider the following 1035-residue polypeptide: Alpha-mannosidase B (1035 aa).

A signal peptide spans 1–20 (MGKVLILFLFVLLLITFINC). Residues asparagine 19 and asparagine 30 are each glycosylated (N-linked (GlcNAc...) asparagine). Residues histidine 47 and aspartate 49 each coordinate Zn(2+). Asparagine 63 is a glycosylation site (N-linked (GlcNAc...) asparagine). Residue aspartate 161 coordinates Zn(2+). The active-site Nucleophile is aspartate 161. N-linked (GlcNAc...) asparagine glycans are attached at residues asparagine 245, asparagine 250, asparagine 270, asparagine 309, asparagine 327, and asparagine 438. Residue histidine 446 coordinates Zn(2+). Asparagine 487, asparagine 497, asparagine 503, asparagine 710, asparagine 719, asparagine 735, asparagine 792, asparagine 852, asparagine 863, asparagine 880, asparagine 962, and asparagine 993 each carry an N-linked (GlcNAc...) asparagine glycan.

It belongs to the glycosyl hydrolase 38 family. Requires Zn(2+) as cofactor.

The protein resides in the secreted. It carries out the reaction Hydrolysis of terminal, non-reducing alpha-D-mannose residues in alpha-D-mannosides.. The sequence is that of Alpha-mannosidase B (manB) from Dictyostelium discoideum (Social amoeba).